Consider the following 242-residue polypeptide: UPF0309 protein BOV_A0853 (242 aa).

The SIS domain maps to 30–209 (AADLIAAAAR…FADVAARLVG (180 aa)).

Belongs to the UPF0309 family.

This Brucella ovis (strain ATCC 25840 / 63/290 / NCTC 10512) protein is UPF0309 protein BOV_A0853.